Reading from the N-terminus, the 831-residue chain is DNA ligase (831 aa).

NAD(+) is bound by residues 34 to 38, 83 to 84, and Glu-114; these read DADYD and SL. The active-site N6-AMP-lysine intermediate is Lys-116. 4 residues coordinate NAD(+): Arg-137, Glu-174, Lys-291, and Lys-315. The Zn(2+) site is built by Cys-409, Cys-412, Cys-427, and Cys-433. The BRCT domain occupies 749–831; the sequence is AHTAPLNGQS…LAFLGQYSAQ (83 aa).

It belongs to the NAD-dependent DNA ligase family. LigA subfamily. Mg(2+) is required as a cofactor. Requires Mn(2+) as cofactor.

The catalysed reaction is NAD(+) + (deoxyribonucleotide)n-3'-hydroxyl + 5'-phospho-(deoxyribonucleotide)m = (deoxyribonucleotide)n+m + AMP + beta-nicotinamide D-nucleotide.. Functionally, DNA ligase that catalyzes the formation of phosphodiester linkages between 5'-phosphoryl and 3'-hydroxyl groups in double-stranded DNA using NAD as a coenzyme and as the energy source for the reaction. It is essential for DNA replication and repair of damaged DNA. The sequence is that of DNA ligase from Xylella fastidiosa (strain 9a5c).